The following is a 301-amino-acid chain: Tyrosine recombinase XerD (301 aa).

A Core-binding (CB) domain is found at 7–90; that stretch reads QFHTTILEQF…ALKVFFLFLK (84 aa). A Tyr recombinase domain is found at 109–294; it reads RLPSVLTPQE…AADSLIEKFL (186 aa). Catalysis depends on residues Arg-153, Lys-175, His-246, Arg-249, and His-272. The active-site O-(3'-phospho-DNA)-tyrosine intermediate is the Tyr-281.

This sequence belongs to the 'phage' integrase family. XerD subfamily. Forms a cyclic heterotetrameric complex composed of two molecules of XerC and two molecules of XerD.

It is found in the cytoplasm. Its function is as follows. Site-specific tyrosine recombinase, which acts by catalyzing the cutting and rejoining of the recombining DNA molecules. The XerC-XerD complex is essential to convert dimers of the bacterial chromosome into monomers to permit their segregation at cell division. It also contributes to the segregational stability of plasmids. The protein is Tyrosine recombinase XerD of Chlamydia pneumoniae (Chlamydophila pneumoniae).